The chain runs to 454 residues: Cobyrinate a,c-diamide synthase (454 aa).

One can recognise a GATase cobBQ-type domain in the interval 244–435 (KIAVAYDSAF…VHIHFLSNIA (192 aa)). Cys327 (nucleophile) is an active-site residue.

The protein belongs to the CobB/CbiA family. Mg(2+) serves as cofactor.

It catalyses the reaction cob(II)yrinate + 2 L-glutamine + 2 ATP + 2 H2O = cob(II)yrinate a,c diamide + 2 L-glutamate + 2 ADP + 2 phosphate + 2 H(+). The protein operates within cofactor biosynthesis; adenosylcobalamin biosynthesis; cob(II)yrinate a,c-diamide from sirohydrochlorin (anaerobic route): step 10/10. Functionally, catalyzes the ATP-dependent amidation of the two carboxylate groups at positions a and c of cobyrinate, using either L-glutamine or ammonia as the nitrogen source. The polypeptide is Cobyrinate a,c-diamide synthase (Thermoplasma volcanium (strain ATCC 51530 / DSM 4299 / JCM 9571 / NBRC 15438 / GSS1)).